The chain runs to 124 residues: Magnetosome protein MamC (124 aa).

The Cytoplasmic portion of the chain corresponds to 2-8; sequence PFHLAPY. The chain crosses the membrane as a helical span at residues 9–29; that stretch reads LAKSVPGVGVLGALVGGAAAL. Topologically, residues 30–64 are lumenal; the sequence is AKNVRLLKEKRITNTEAAIDTGKETVGAGLATALS. The tract at residues 36 to 56 is MIC, when fused with the C-terminus of maltose-binding protein (MBP) or expressed as a fragment, improves quality of iron particles during precipitation experiments, binds magnetite; that stretch reads LKEKRITNTEAAIDTGKETVG. Residues 65–85 traverse the membrane as a helical segment; the sequence is AVAATAVGGGLVVSLGTALVA. Over 86–124 the chain is Cytoplasmic; the sequence is GVAAKYAWDRGVDLVEKELNRGKAANGASDEDILRDELA.

Belongs to the magnetosome MamC family. As to quaternary structure, probably interacts with MamA.

It localises to the magnetosome membrane. Probably involved in magnetite crystal growth. The lumenal domain may bind the magnetite crystals, affecting crystal size and shape. This is Magnetosome protein MamC from Paramagnetospirillum magneticum (strain ATCC 700264 / AMB-1) (Magnetospirillum magneticum).